Here is a 295-residue protein sequence, read N- to C-terminus: Small ribosomal subunit protein uS2 (295 aa).

Belongs to the universal ribosomal protein uS2 family. Component of the small ribosomal subunit. Mature ribosomes consist of a small (40S) and a large (60S) subunit. The 40S subunit contains about 33 different proteins and 1 molecule of RNA (18S). The 60S subunit contains about 49 different proteins and 3 molecules of RNA (25S, 5.8S and 5S). Interacts with RPS21.

It localises to the cytoplasm. Functionally, required for the assembly and/or stability of the 40S ribosomal subunit. Required for the processing of the 20S rRNA-precursor to mature 18S rRNA in a late step of the maturation of 40S ribosomal subunits. This chain is Small ribosomal subunit protein uS2, found in Paracoccidioides brasiliensis (strain Pb18).